The primary structure comprises 136 residues: Large ribosomal subunit protein uL16 (136 aa).

This sequence belongs to the universal ribosomal protein uL16 family. As to quaternary structure, part of the 50S ribosomal subunit.

Its function is as follows. Binds 23S rRNA and is also seen to make contacts with the A and possibly P site tRNAs. The polypeptide is Large ribosomal subunit protein uL16 (Photobacterium profundum (strain SS9)).